The chain runs to 239 residues: Sugar fermentation stimulation protein homolog (239 aa).

The protein belongs to the SfsA family.

The sequence is that of Sugar fermentation stimulation protein homolog from Synechococcus sp. (strain JA-2-3B'a(2-13)) (Cyanobacteria bacterium Yellowstone B-Prime).